Reading from the N-terminus, the 331-residue chain is N-arachidonyl glycine receptor (331 aa).

At 1-26 the chain is on the extracellular side; the sequence is MITLNNQDQPVPFNSSHPDEYKIAAL. N-linked (GlcNAc...) asparagine glycosylation is present at N14. Residues 27 to 47 form a helical membrane-spanning segment; sequence VFYSCIFIIGLFVNITALWVF. Residues 48-56 are Cytoplasmic-facing; it reads SCTTKKRTT. The helical transmembrane segment at 57–77 threads the bilayer; the sequence is VTIYMMNVALVDLIFIMTLPF. Residues 78–95 are Extracellular-facing; that stretch reads RMFYYAKDEWPFGEYFCQ. A disulfide bridge links C94 with C172. A helical transmembrane segment spans residues 96–116; that stretch reads ILGALTVFYPSIALWLLAFIS. Residues 117–138 are Cytoplasmic-facing; sequence ADRYMAIVQPKYAKELKNTCKA. Residues 139 to 159 form a helical membrane-spanning segment; it reads VLACVGVWIMTLTTTTPLLLL. Residues 160–191 lie on the Extracellular side of the membrane; it reads YKDPDKDSTPATCLKISDIIYLKAVNVLNLTR. A helical membrane pass occupies residues 192-212; that stretch reads LTFFFLIPLFIMIGCYLVIIH. The Cytoplasmic portion of the chain corresponds to 213 to 232; sequence NLLHGRTSKLKPKVKEKSIR. A helical membrane pass occupies residues 233 to 253; the sequence is IIITLLVQVLVCFMPFHICFA. Residues 254–268 are Extracellular-facing; it reads FLMLGTGENSYNPWG. Residues 269–289 form a helical membrane-spanning segment; the sequence is AFTTFLMNLSTCLDVILYYIV. Residues 290–331 lie on the Cytoplasmic side of the membrane; that stretch reads SKQFQARVISVMLYRNYLRSMRRKSFRSGSLRSLSNINSEML. S322 bears the Phosphoserine mark.

The protein belongs to the G-protein coupled receptor 1 family. Expressed in midpiece of spermatozoon (at protein level). Most abundant in testis and spleen. Highly expressed in CD4 and CD8-positive T-cells as well as CD19-positive B-cells.

The protein resides in the cell membrane. The protein localises to the cytoplasmic vesicle membrane. Its function is as follows. G protein-coupled receptor (GPCR) that plays a role in diverse physiological processes particularly within the immune and nervous systems. Becomes active when triggered by various endogenous ligands including endocannabinoid N-arachidonyl glycine (NAGly), delta-9-tetrahydrocannabinol or resolvin D2/RvD2 derived from the omega-3 fatty acid docosahexaenoic acid (DHA). Upon RvD2 binding, facilitates the resolution of inflammation, aiding in tissue repair and homeostasis. Mechanistically, RvD2 ligation initiates Galphas protein coupling, activation of cAMP-PKA signaling pathway and phosphorylation of STAT3, leading to RvD2-stimulated macrophage phagocytosis. Mediates NAGly-induced process of reorganization of actin filaments and induction of acrosomal exocytosis. Activation by N-arachidonoyl glycine (NAGly) can also induce apoptosis in macrophages. Plays a role in homeostasis of CD8+ subsets of intraepithelial lymphocytes (IELs) (CD8alphaalpha and CD8alphabeta IELs) in small intestine by supporting preferential migration of CD8alphaalpha T-cells to intraepithelial compartment over lamina propria compartment, and by mediating their reconstitution into small intestine after bone marrow transplant. Also participates in hypotensive responses, mediating reduction in intraocular and blood pressure. This chain is N-arachidonyl glycine receptor (GPR18), found in Homo sapiens (Human).